A 185-amino-acid polypeptide reads, in one-letter code: Adenine phosphoribosyltransferase (185 aa).

Belongs to the purine/pyrimidine phosphoribosyltransferase family. In terms of assembly, homodimer.

It localises to the cytoplasm. It catalyses the reaction AMP + diphosphate = 5-phospho-alpha-D-ribose 1-diphosphate + adenine. It functions in the pathway purine metabolism; AMP biosynthesis via salvage pathway; AMP from adenine: step 1/1. Catalyzes a salvage reaction resulting in the formation of AMP, that is energically less costly than de novo synthesis. The chain is Adenine phosphoribosyltransferase from Aliarcobacter butzleri (strain RM4018) (Arcobacter butzleri).